Here is a 450-residue protein sequence, read N- to C-terminus: Tubulin alpha-1 chain (450 aa).

Residues Gln11, Glu71, Gly144, Thr145, Thr179, Asn206, and Asn228 each coordinate GTP. Glu71 serves as a coordination point for Mg(2+). Glu254 is an active-site residue.

This sequence belongs to the tubulin family. In terms of assembly, dimer of alpha and beta chains. A typical microtubule is a hollow water-filled tube with an outer diameter of 25 nm and an inner diameter of 15 nM. Alpha-beta heterodimers associate head-to-tail to form protofilaments running lengthwise along the microtubule wall with the beta-tubulin subunit facing the microtubule plus end conferring a structural polarity. Microtubules usually have 13 protofilaments but different protofilament numbers can be found in some organisms and specialized cells. Requires Mg(2+) as cofactor. Undergoes a tyrosination/detyrosination cycle, the cyclic removal and re-addition of a C-terminal tyrosine residue by the enzymes tubulin tyrosine carboxypeptidase (TTCP) and tubulin tyrosine ligase (TTL), respectively.

Its subcellular location is the cytoplasm. It localises to the cytoskeleton. It carries out the reaction GTP + H2O = GDP + phosphate + H(+). Tubulin is the major constituent of microtubules, a cylinder consisting of laterally associated linear protofilaments composed of alpha- and beta-tubulin heterodimers. Microtubules grow by the addition of GTP-tubulin dimers to the microtubule end, where a stabilizing cap forms. Below the cap, tubulin dimers are in GDP-bound state, owing to GTPase activity of alpha-tubulin. The protein is Tubulin alpha-1 chain (TUBA1) of Oryza sativa subsp. japonica (Rice).